The primary structure comprises 440 residues: Ribosomal protein uS12 methylthiotransferase RimO (440 aa).

The 118-residue stretch at 8–125 (LRCHAISLGC…WNEQILLALN (118 aa)) folds into the MTTase N-terminal domain. 6 residues coordinate [4Fe-4S] cluster: C17, C52, C87, C152, C156, and C159. A Radical SAM core domain is found at 138–368 (TTGKSYAWLK…MEIQLKISEK (231 aa)). One can recognise a TRAM domain in the interval 371-439 (KNFVGKRLSL…SYDLVALADS (69 aa)).

The protein belongs to the methylthiotransferase family. RimO subfamily. It depends on [4Fe-4S] cluster as a cofactor.

It localises to the cytoplasm. It carries out the reaction L-aspartate(89)-[ribosomal protein uS12]-hydrogen + (sulfur carrier)-SH + AH2 + 2 S-adenosyl-L-methionine = 3-methylsulfanyl-L-aspartate(89)-[ribosomal protein uS12]-hydrogen + (sulfur carrier)-H + 5'-deoxyadenosine + L-methionine + A + S-adenosyl-L-homocysteine + 2 H(+). In terms of biological role, catalyzes the methylthiolation of an aspartic acid residue of ribosomal protein uS12. The chain is Ribosomal protein uS12 methylthiotransferase RimO from Lawsonia intracellularis (strain PHE/MN1-00).